We begin with the raw amino-acid sequence, 195 residues long: UPF0314 protein RHECIAT_CH0004233 (195 aa).

The next 4 membrane-spanning stretches (helical) occupy residues 15 to 35 (FWFV…YLMG), 64 to 84 (WYTP…YLIL), 127 to 147 (GDSI…FFFA), and 150 to 170 (APVA…GYVI).

This sequence belongs to the UPF0314 family.

It is found in the cell membrane. The sequence is that of UPF0314 protein RHECIAT_CH0004233 from Rhizobium etli (strain CIAT 652).